We begin with the raw amino-acid sequence, 440 residues long: Oligodendrocyte-myelin glycoprotein (440 aa).

The signal sequence occupies residues 1 to 24 (MEYQILKMSSCLFILLFLTPGILC). Residues 25–55 (ICPLQCTCTERHRHVDCSGRNLTTLPPGLQE) enclose the LRRNT domain. N-linked (GlcNAc...) asparagine glycosylation is found at Asn-45 and Asn-61. LRR repeat units lie at residues 56 to 78 (NIIH…TPYT), 79 to 100 (NLRT…LPRS), 101 to 121 (LWNM…DTAY), 124 to 145 (NLKY…KNTL), 147 to 168 (SLEV…MPSK), 169 to 189 (LHIV…TLIN), 192 to 213 (NLTH…SFDQ), and 216 to 239 (QLQE…TYLL). Asn-103 carries an N-linked (GlcNAc...) asparagine glycan. N-linked (GlcNAc...) asparagine glycosylation is found at Asn-152, Asn-176, Asn-189, Asn-192, and Asn-234. Ser/Thr-rich repeat units follow at residues 229 to 270 (CDHK…YPTP), 271 to 292 (PGFT…INSL), 293 to 335 (SMVT…VAYP), 336 to 377 (EDTP…PPSP), and 378 to 416 (VTLS…TRPP). Residues Asn-364 and Asn-389 are each glycosylated (N-linked (GlcNAc...) asparagine). Ser-417 carries GPI-anchor amidated serine lipidation. Positions 418 to 440 (AASAWKVNASLLLMLNAVVMLAG) are cleaved as a propeptide — removed in mature form. N-linked (GlcNAc...) asparagine glycosylation occurs at Asn-425.

As to quaternary structure, binds to RTN4R. Post-translationally, O-glycosylated in its Ser/Thr-rich repeat domain. In terms of tissue distribution, oligodendrocytes and myelin of the central nervous system.

The protein resides in the cell membrane. Its function is as follows. Cell adhesion molecule contributing to the interactive process required for myelination in the central nervous system. This chain is Oligodendrocyte-myelin glycoprotein (Omg), found in Mus musculus (Mouse).